The chain runs to 344 residues: Protein Tob2 (344 aa).

Disordered regions lie at residues 144–169 and 191–225; these read GSQD…FIPR and MKKG…SPTN. Residues 145–164 show a composition bias toward low complexity; sequence SQDSSLSNSPSPSFGQSPSP. Over residues 194–210 the composition is skewed to gly residues; that stretch reads GGGAASGGGVASSGAGG. The span at 211–225 shows a compositional bias: low complexity; that stretch reads QQPPQQPRMARSPTN. Ser254 carries the phosphoserine modification.

The protein belongs to the BTG family. Associates with CAF1. Ubiquitous.

It localises to the cytoplasm. Functionally, anti-proliferative protein inhibits cell cycle progression from the G0/G1 to S phases. This is Protein Tob2 (TOB2) from Homo sapiens (Human).